We begin with the raw amino-acid sequence, 548 residues long: Chaperonin GroEL (548 aa).

ATP contacts are provided by residues 30-33 (TLGP), lysine 51, 87-91 (DGTTT), glycine 415, 479-481 (NAA), and aspartate 495.

The protein belongs to the chaperonin (HSP60) family. In terms of assembly, forms a cylinder of 14 subunits composed of two heptameric rings stacked back-to-back. Interacts with the co-chaperonin GroES.

It is found in the cytoplasm. The enzyme catalyses ATP + H2O + a folded polypeptide = ADP + phosphate + an unfolded polypeptide.. Functionally, together with its co-chaperonin GroES, plays an essential role in assisting protein folding. The GroEL-GroES system forms a nano-cage that allows encapsulation of the non-native substrate proteins and provides a physical environment optimized to promote and accelerate protein folding. The protein is Chaperonin GroEL of Escherichia fergusonii (strain ATCC 35469 / DSM 13698 / CCUG 18766 / IAM 14443 / JCM 21226 / LMG 7866 / NBRC 102419 / NCTC 12128 / CDC 0568-73).